Here is a 362-residue protein sequence, read N- to C-terminus: 2-aminoethylphosphonate--pyruvate transaminase (362 aa).

Lys-193 carries the post-translational modification N6-(pyridoxal phosphate)lysine.

This sequence belongs to the class-V pyridoxal-phosphate-dependent aminotransferase family. PhnW subfamily. In terms of assembly, homodimer. Requires pyridoxal 5'-phosphate as cofactor.

The enzyme catalyses (2-aminoethyl)phosphonate + pyruvate = phosphonoacetaldehyde + L-alanine. In terms of biological role, involved in phosphonate degradation. The protein is 2-aminoethylphosphonate--pyruvate transaminase of Phocaeicola vulgatus (strain ATCC 8482 / DSM 1447 / JCM 5826 / CCUG 4940 / NBRC 14291 / NCTC 11154) (Bacteroides vulgatus).